A 206-amino-acid chain; its full sequence is Cytochrome c (206 aa).

3 helical membrane passes run 10–30 (IALA…VSFL), 49–69 (FMGW…LGKM), and 76–96 (KWFL…FLSL). Positions 152, 155, 156, and 182 each coordinate heme.

As to quaternary structure, monomer. Component of the photosynthetic reaction center composed of protein subunits PscA, PscC, PscB and PscD. The reaction center interacts with FmoA (which forms the Fenna-Matthews-Olson (FMO) complex). The reaction center/FmoA complex has two PscA subunits, one PscB and one PscD subunit, probably two FmoA complexes and at least one PscC subunit. Post-translationally, binds 1 heme group per subunit.

Its subcellular location is the cell inner membrane. Functionally, monoheme cytochrome which is the immediate electron donor to P840 of the photosynthetic reaction center complex. The chain is Cytochrome c (pscC) from Chlorobaculum tepidum (strain ATCC 49652 / DSM 12025 / NBRC 103806 / TLS) (Chlorobium tepidum).